A 477-amino-acid chain; its full sequence is Erythritol/L-threitol-binding protein (477 aa).

The segment at residues 1–38 (MMSRESQPGLHRQLSRRNMLAAMGLAGAAAVSLPVLSA) is a signal peptide (tat-type signal).

It belongs to the bacterial solute-binding protein 1 family. Post-translationally, predicted to be exported by the Tat system. The position of the signal peptide cleavage has not been experimentally proven.

In terms of biological role, part of an ABC transporter complex involved in erythritol/L-threitol import. Binds erythritol and L-threitol. Functions in the transport for the degradation pathways of erythritol and L-threitol, that allow M.smegmatis to grow on these compounds as the sole carbon source. This is Erythritol/L-threitol-binding protein from Mycolicibacterium smegmatis (strain ATCC 700084 / mc(2)155) (Mycobacterium smegmatis).